A 328-amino-acid chain; its full sequence is Phosphate acyltransferase (328 aa).

Belongs to the PlsX family. Homodimer. Probably interacts with PlsY.

The protein resides in the cytoplasm. The enzyme catalyses a fatty acyl-[ACP] + phosphate = an acyl phosphate + holo-[ACP]. The protein operates within lipid metabolism; phospholipid metabolism. Its function is as follows. Catalyzes the reversible formation of acyl-phosphate (acyl-PO(4)) from acyl-[acyl-carrier-protein] (acyl-ACP). This enzyme utilizes acyl-ACP as fatty acyl donor, but not acyl-CoA. This Staphylococcus aureus (strain MSSA476) protein is Phosphate acyltransferase.